The chain runs to 338 residues: MNVFYDKDADLSLIKGKQVTIIGYGSQGHAHALNLKDSGVNVTVGLRKDGASWSKAENAGLSVKEVAEAVKGADVVMMLLPDEQIADVYAKEVHANIKQGAALAFAHGFNVHYGQVIPRADLDVIMIAPKAPGHTVRGTYSQGGGVPHLIAVAQNKSGAARDIALSYAAANGGGRAGIIETNFREETETDLFGEQAVLCGGTVELIKAGFETLVEAGYAPEMAYFECLHELKLIVDLIYEGGIANMNYSISNNAEYGEYVTGPRVVTEETKKAMKQCLTDIQTGEYAKSFILENKAGAPTLQSRRRLTAEHQIEQVGAKLRAMMPWIAKNKLVDQTKN.

One can recognise a KARI N-terminal Rossmann domain in the interval 1 to 181 (MNVFYDKDAD…GGGRAGIIET (181 aa)). NADP(+) contacts are provided by residues 24–27 (YGSQ), arginine 47, and serine 52. Residue histidine 107 is part of the active site. NADP(+) is bound at residue glycine 133. Residues 182-327 (NFREETETDL…AKLRAMMPWI (146 aa)) enclose the KARI C-terminal knotted domain. Mg(2+) is bound by residues aspartate 190, glutamate 194, glutamate 226, and glutamate 230. Position 251 (serine 251) interacts with substrate.

The protein belongs to the ketol-acid reductoisomerase family. It depends on Mg(2+) as a cofactor.

The enzyme catalyses (2R)-2,3-dihydroxy-3-methylbutanoate + NADP(+) = (2S)-2-acetolactate + NADPH + H(+). It carries out the reaction (2R,3R)-2,3-dihydroxy-3-methylpentanoate + NADP(+) = (S)-2-ethyl-2-hydroxy-3-oxobutanoate + NADPH + H(+). It participates in amino-acid biosynthesis; L-isoleucine biosynthesis; L-isoleucine from 2-oxobutanoate: step 2/4. It functions in the pathway amino-acid biosynthesis; L-valine biosynthesis; L-valine from pyruvate: step 2/4. In terms of biological role, involved in the biosynthesis of branched-chain amino acids (BCAA). Catalyzes an alkyl-migration followed by a ketol-acid reduction of (S)-2-acetolactate (S2AL) to yield (R)-2,3-dihydroxy-isovalerate. In the isomerase reaction, S2AL is rearranged via a Mg-dependent methyl migration to produce 3-hydroxy-3-methyl-2-ketobutyrate (HMKB). In the reductase reaction, this 2-ketoacid undergoes a metal-dependent reduction by NADPH to yield (R)-2,3-dihydroxy-isovalerate. This is Ketol-acid reductoisomerase (NADP(+)) from Burkholderia ambifaria (strain MC40-6).